Reading from the N-terminus, the 121-residue chain is Basic phospholipase A2 BmjeTX-I (121 aa).

7 disulfide bridges follow: cysteine 26-cysteine 114, cysteine 28-cysteine 45, cysteine 44-cysteine 95, cysteine 50-cysteine 121, cysteine 51-cysteine 88, cysteine 58-cysteine 82, and cysteine 76-cysteine 86. Positions 27, 29, and 31 each coordinate Ca(2+). Histidine 48 is an active-site residue. Aspartate 49 lines the Ca(2+) pocket. Aspartate 89 is a catalytic residue.

Ca(2+) serves as cofactor. Expressed by the venom gland.

Its subcellular location is the secreted. It carries out the reaction a 1,2-diacyl-sn-glycero-3-phosphocholine + H2O = a 1-acyl-sn-glycero-3-phosphocholine + a fatty acid + H(+). In terms of biological role, snake venom phospholipase A2 (PLA2) that induces a slight blockade of neuromuscular contraction in an indirectly stimulated chick biventer cervicis nerve-muscle preparation. Does not inhibit contraction of chick biventer cervicic nerve-muscle preparation in response to treatment with acetylcholine or KCl. The neuromuscular blockade is mediated by inhibitory action at the presynaptic motor nerve endings. Lyses skeletal myoblasts and myotubes in vitro, and intramuscular injection causes local muscle necrosis. Induces edema in the mouse foot pad. Induces a transient increase of IL-6 levels. PLA2 catalyzes the calcium-dependent hydrolysis of the 2-acyl groups in 3-sn-phosphoglycerides. This chain is Basic phospholipase A2 BmjeTX-I, found in Bothrops marajoensis (Marajo lancehead).